We begin with the raw amino-acid sequence, 353 residues long: Photosystem II protein D1 (353 aa).

Position 2 is an N-acetylthreonine (Thr2). Thr2 carries the phosphothreonine modification. The next 3 membrane-spanning stretches (helical) occupy residues 29–46 (YIGW…TATS), 118–133 (HFLL…EWEL), and 142–156 (WIAV…AATA). His118 contacts chlorophyll a. Tyr126 is a binding site for pheophytin a. 2 residues coordinate [CaMn4O5] cluster: Asp170 and Glu189. A helical transmembrane segment spans residues 197-218 (FHMLGVAGVFGGSLFSAMHGSL). His198 contacts chlorophyll a. Residues His215 and 264–265 (SF) contribute to the a quinone site. His215 is a binding site for Fe cation. Fe cation is bound at residue His272. Residues 274 to 288 (FLAAWPVVGIWFTAL) form a helical membrane-spanning segment. [CaMn4O5] cluster contacts are provided by His332, Glu333, Asp342, and Ala344. Positions 345 to 353 (AIEAPSTNG) are excised as a propeptide.

This sequence belongs to the reaction center PufL/M/PsbA/D family. As to quaternary structure, PSII is composed of 1 copy each of membrane proteins PsbA, PsbB, PsbC, PsbD, PsbE, PsbF, PsbH, PsbI, PsbJ, PsbK, PsbL, PsbM, PsbT, PsbX, PsbY, PsbZ, Psb30/Ycf12, at least 3 peripheral proteins of the oxygen-evolving complex and a large number of cofactors. It forms dimeric complexes. It depends on The D1/D2 heterodimer binds P680, chlorophylls that are the primary electron donor of PSII, and subsequent electron acceptors. It shares a non-heme iron and each subunit binds pheophytin, quinone, additional chlorophylls, carotenoids and lipids. D1 provides most of the ligands for the Mn4-Ca-O5 cluster of the oxygen-evolving complex (OEC). There is also a Cl(-1) ion associated with D1 and D2, which is required for oxygen evolution. The PSII complex binds additional chlorophylls, carotenoids and specific lipids. as a cofactor. In terms of processing, tyr-161 forms a radical intermediate that is referred to as redox-active TyrZ, YZ or Y-Z. Post-translationally, C-terminally processed by CTPA; processing is essential to allow assembly of the oxygen-evolving complex and thus photosynthetic growth.

Its subcellular location is the plastid. The protein resides in the chloroplast thylakoid membrane. The enzyme catalyses 2 a plastoquinone + 4 hnu + 2 H2O = 2 a plastoquinol + O2. Its function is as follows. Photosystem II (PSII) is a light-driven water:plastoquinone oxidoreductase that uses light energy to abstract electrons from H(2)O, generating O(2) and a proton gradient subsequently used for ATP formation. It consists of a core antenna complex that captures photons, and an electron transfer chain that converts photonic excitation into a charge separation. The D1/D2 (PsbA/PsbD) reaction center heterodimer binds P680, the primary electron donor of PSII as well as several subsequent electron acceptors. This chain is Photosystem II protein D1, found in Petunia hybrida (Petunia).